We begin with the raw amino-acid sequence, 95 residues long: UPF0512 protein H (95 aa).

This sequence belongs to the UPF0512 family.

This is UPF0512 protein H from Dictyostelium discoideum (Social amoeba).